Reading from the N-terminus, the 123-residue chain is uncharacterized protein (123 aa).

The interval 89 to 123 (GVGGRKLGSEGQSLSENSEQRSLMRWGCGGSSERR) is disordered. The span at 98–109 (EGQSLSENSEQR) shows a compositional bias: polar residues.

This is an uncharacterized protein from Encephalitozoon cuniculi (strain GB-M1) (Microsporidian parasite).